Consider the following 261-residue polypeptide: Indole-3-glycerol phosphate synthase (261 aa).

This sequence belongs to the TrpC family.

It catalyses the reaction 1-(2-carboxyphenylamino)-1-deoxy-D-ribulose 5-phosphate + H(+) = (1S,2R)-1-C-(indol-3-yl)glycerol 3-phosphate + CO2 + H2O. It participates in amino-acid biosynthesis; L-tryptophan biosynthesis; L-tryptophan from chorismate: step 4/5. The protein is Indole-3-glycerol phosphate synthase of Campylobacter concisus (strain 13826).